A 566-amino-acid polypeptide reads, in one-letter code: Membrane protein insertase YidC (566 aa).

Transmembrane regions (helical) follow at residues 3–23 (IKRIILYVIVALLAIALFNAW), 346–366 (GWLWPISMLLFWILSAVHAVV), 369–389 (WGWSIIITTILIKIVFYWFSA), 436–456 (GGCLPMLIQVPVFIAFYYVII), and 509–529 (MWILPVIFTVFFINFPAGLVL).

This sequence belongs to the OXA1/ALB3/YidC family. Type 1 subfamily. In terms of assembly, interacts with the Sec translocase complex via SecD. Specifically interacts with transmembrane segments of nascent integral membrane proteins during membrane integration.

It is found in the cell inner membrane. Its function is as follows. Required for the insertion and/or proper folding and/or complex formation of integral membrane proteins into the membrane. Involved in integration of membrane proteins that insert both dependently and independently of the Sec translocase complex, as well as at least some lipoproteins. Aids folding of multispanning membrane proteins. This Coxiella burnetii (strain RSA 331 / Henzerling II) protein is Membrane protein insertase YidC.